A 105-amino-acid polypeptide reads, in one-letter code: Iron-sulfur cluster assembly protein CyaY (105 aa).

It belongs to the frataxin family.

Its function is as follows. Involved in iron-sulfur (Fe-S) cluster assembly. May act as a regulator of Fe-S biogenesis. The chain is Iron-sulfur cluster assembly protein CyaY from Photobacterium profundum (strain SS9).